A 398-amino-acid chain; its full sequence is Subtilisin-like protease CPC735_050320 (398 aa).

A signal peptide spans 1–19 (MVFLGKILPLALAALSVNG). The propeptide occupies 20-117 (AEILSAPGAE…IERDQIMKAS (98 aa)). One can recognise an Inhibitor I9 domain in the interval 35–115 (YIVVMKEGTS…AYIERDQIMK (81 aa)). Residues 127-398 (SWGLARVSSR…NRLINNGVSQ (272 aa)) enclose the Peptidase S8 domain. Active-site charge relay system residues include D159 and H190. N220 and N250 each carry an N-linked (GlcNAc...) asparagine glycan. The Charge relay system role is filled by S344.

Belongs to the peptidase S8 family.

The protein localises to the secreted. Its function is as follows. Secreted subtilisin-like serine protease with keratinolytic activity that contributes to pathogenicity. The sequence is that of Subtilisin-like protease CPC735_050320 from Coccidioides posadasii (strain C735) (Valley fever fungus).